A 266-amino-acid chain; its full sequence is Large ribosomal subunit protein uL2m (266 aa).

The protein belongs to the universal ribosomal protein uL2 family.

The protein localises to the mitochondrion. The polypeptide is Large ribosomal subunit protein uL2m (mrpl2) (Dictyostelium discoideum (Social amoeba)).